Reading from the N-terminus, the 375-residue chain is Trichodiene synthase (375 aa).

It belongs to the trichodiene synthase family.

It catalyses the reaction (2E,6E)-farnesyl diphosphate = trichodiene + diphosphate. It functions in the pathway sesquiterpene biosynthesis; trichothecene biosynthesis. In terms of biological role, TS is a member of the terpene cyclase group of enzymes. It catalyzes the isomerization and cyclization of farnesyl pyro-phosphate to form trichodiene, the first cyclic intermediate in the biosynthetic pathway for trichothecenes. It serves to branch trichothecene biosynthesis from the isoprenoid pathway. This Fusarium austroamericanum protein is Trichodiene synthase (TRI5).